A 74-amino-acid polypeptide reads, in one-letter code: Benzylsuccinate synthase beta subunit (74 aa).

Heterohexamer composed of 2 alpha subunits, 2 beta subunits and 2 gamma subunits.

The enzyme catalyses toluene + fumarate = 2-benzylsuccinate. It functions in the pathway xenobiotic degradation; toluene degradation. Its activity is regulated as follows. Activated by the benzylsuccinate synthase activating enzyme BssD. Rapidly inactivated by oxygen. Catalyzes the addition of fumarate to the methyl group of toluene, leading to the formation of benzylsuccinate. The protein is Benzylsuccinate synthase beta subunit (bssB) of Thauera aromatica.